The sequence spans 182 residues: Ribosome maturation factor RimM (182 aa).

Positions 103 to 182 (EDEFYWRELF…RIEVDWDPGF (80 aa)) constitute a PRC barrel domain.

This sequence belongs to the RimM family. In terms of assembly, binds ribosomal protein uS19.

It localises to the cytoplasm. Functionally, an accessory protein needed during the final step in the assembly of 30S ribosomal subunit, possibly for assembly of the head region. Essential for efficient processing of 16S rRNA. May be needed both before and after RbfA during the maturation of 16S rRNA. It has affinity for free ribosomal 30S subunits but not for 70S ribosomes. This Vibrio parahaemolyticus serotype O3:K6 (strain RIMD 2210633) protein is Ribosome maturation factor RimM.